A 475-amino-acid polypeptide reads, in one-letter code: ATP synthase subunit beta 1 (475 aa).

152–159 is a binding site for ATP; sequence GGAGVGKT.

Belongs to the ATPase alpha/beta chains family. As to quaternary structure, F-type ATPases have 2 components, CF(1) - the catalytic core - and CF(0) - the membrane proton channel. CF(1) has five subunits: alpha(3), beta(3), gamma(1), delta(1), epsilon(1). CF(0) has four main subunits: a(1), b(1), b'(1) and c(9-12).

It localises to the cell inner membrane. It carries out the reaction ATP + H2O + 4 H(+)(in) = ADP + phosphate + 5 H(+)(out). Produces ATP from ADP in the presence of a proton gradient across the membrane. The catalytic sites are hosted primarily by the beta subunits. This Cereibacter sphaeroides (strain ATCC 17029 / ATH 2.4.9) (Rhodobacter sphaeroides) protein is ATP synthase subunit beta 1.